An 869-amino-acid chain; its full sequence is Ribonucleoside-diphosphate reductase large chain 2 (869 aa).

The ATP-cone domain occupies 1 to 92 (MYVIKRDGRK…ISNLHKQTTK (92 aa)). Residues 5–6 (KR), 11–17 (EPVQFDK), threonine 53, and aspartate 57 each bind ATP. Residues serine 202 and serine 217 each coordinate GDP. Cysteine 218 and cysteine 443 are oxidised to a cystine. Residues 226 to 228 (DSI), lysine 243, arginine 256, and 263 to 264 (AG) each bind dTTP. Residue serine 227 is modified to Phosphoserine. Lysine 387 is covalently cross-linked (Glycyl lysine isopeptide (Lys-Gly) (interchain with G-Cter in ubiquitin)). Asparagine 426 contacts GDP. Asparagine 426 (proton acceptor) is an active-site residue. The active-site Cysteine radical intermediate is cysteine 428. GDP-binding positions include glutamate 430 and 608-611 (TAST). Glutamate 430 (proton acceptor) is an active-site residue. The segment at 793–843 (SALTESSDNEKDASPVPSEQSSVSSAMSNVKLEDSVAPAVPTETIKEDSDE) is disordered. Residues serine 806, serine 827, and serine 868 each carry the phosphoserine modification. A compositionally biased stretch (low complexity) spans 806–820 (SPVPSEQSSVSSAMS).

It belongs to the ribonucleoside diphosphate reductase large chain family. In terms of assembly, heterotetramer of two large (R1) and two small (R2) subunits. S.cerevisiae has two different R1 subunits (RNR1 and RNR3) and two different R2 subunits (RNR2 and RNR4). The functional form of the small subunits is a RNR2-RNR4 heterodimer, where RNR2 provides the iron-radical center and RNR4 is required for proper folding of RNR2 and assembly with the large subunits. Under normal growth conditions, the active form of the large subunits is a homodimer of the constitutively expressed RNR1. In damaged cells or cells arrested for DNA synthesis, the reductase consists of multiple species because of the association of the small subunits (RNR2-RNR4) with either the RNR1 homodimer or a heterodimer of RNR1 and the damage-inducible RNR3.

Its subcellular location is the cytoplasm. The catalysed reaction is a 2'-deoxyribonucleoside 5'-diphosphate + [thioredoxin]-disulfide + H2O = a ribonucleoside 5'-diphosphate + [thioredoxin]-dithiol. Under complex allosteric control mediated by deoxynucleoside triphosphates and ATP binding to separate specificity and activation sites on the large subunit. The type of nucleotide bound at the specificity site determines substrate preference. It seems probable that ATP makes the enzyme reduce CDP and UDP, dGTP favors ADP reduction and dTTP favors GDP reduction. Stimulated by ATP and inhibited by dATP binding to the activity site. Functionally, provides the precursors necessary for DNA synthesis. Catalyzes the biosynthesis of deoxyribonucleotides from the corresponding ribonucleotides. This chain is Ribonucleoside-diphosphate reductase large chain 2 (RNR3), found in Saccharomyces cerevisiae (strain ATCC 204508 / S288c) (Baker's yeast).